We begin with the raw amino-acid sequence, 1177 residues long: Dynein axonemal assembly factor 9 (1177 aa).

The disordered stretch occupies residues 1 to 27 (MDVYPPRRQGLPRARSPGGSSRGSPSV). The span at 11–27 (LPRARSPGGSSRGSPSV) shows a compositional bias: low complexity.

Interacts with ARL3.

May act as an effector for ARL3. This chain is Dynein axonemal assembly factor 9, found in Homo sapiens (Human).